A 212-amino-acid polypeptide reads, in one-letter code: Pyrrolidone-carboxylate peptidase (212 aa).

Catalysis depends on residues Glu80, Cys143, and His165.

This sequence belongs to the peptidase C15 family. In terms of assembly, homotetramer.

It is found in the cytoplasm. The catalysed reaction is Release of an N-terminal pyroglutamyl group from a polypeptide, the second amino acid generally not being Pro.. Its function is as follows. Removes 5-oxoproline from various penultimate amino acid residues except L-proline. The sequence is that of Pyrrolidone-carboxylate peptidase from Vibrio parahaemolyticus serotype O3:K6 (strain RIMD 2210633).